The following is a 363-amino-acid chain: Phosphoribosylformylglycinamidine cyclo-ligase (363 aa).

Belongs to the AIR synthase family.

It localises to the cytoplasm. The enzyme catalyses 2-formamido-N(1)-(5-O-phospho-beta-D-ribosyl)acetamidine + ATP = 5-amino-1-(5-phospho-beta-D-ribosyl)imidazole + ADP + phosphate + H(+). The protein operates within purine metabolism; IMP biosynthesis via de novo pathway; 5-amino-1-(5-phospho-D-ribosyl)imidazole from N(2)-formyl-N(1)-(5-phospho-D-ribosyl)glycinamide: step 2/2. The protein is Phosphoribosylformylglycinamidine cyclo-ligase of Parvibaculum lavamentivorans (strain DS-1 / DSM 13023 / NCIMB 13966).